A 125-amino-acid chain; its full sequence is Histone H2A (125 aa).

Residues 1-18 (MSGRGKGGKVKAKAKSRS) show a composition bias toward basic residues. The tract at residues 1-21 (MSGRGKGGKVKAKAKSRSSRA) is disordered. Ser2 is modified (N-acetylserine). Ser2 carries the post-translational modification Phosphoserine. A Glycyl lysine isopeptide (Lys-Gly) (interchain with G-Cter in ubiquitin) cross-link involves residue Lys119.

It belongs to the histone H2A family. As to quaternary structure, the nucleosome is a histone octamer containing two molecules each of H2A, H2B, H3 and H4 assembled in one H3-H4 heterotetramer and two H2A-H2B heterodimers. The octamer wraps approximately 147 bp of DNA. Monoubiquitination of Lys-119 gives a specific tag for epigenetic transcriptional repression. Post-translationally, phosphorylation on Ser-2 is enhanced during mitosis. Phosphorylation on Ser-2 directly represses transcription.

The protein resides in the nucleus. It is found in the chromosome. In terms of biological role, core component of nucleosome. Nucleosomes wrap and compact DNA into chromatin, limiting DNA accessibility to the cellular machineries which require DNA as a template. Histones thereby play a central role in transcription regulation, DNA repair, DNA replication and chromosomal stability. DNA accessibility is regulated via a complex set of post-translational modifications of histones, also called histone code, and nucleosome remodeling. The polypeptide is Histone H2A (Chironomus thummi thummi (Midge)).